The following is a 342-amino-acid chain: Outer membrane porin C (342 aa).

It belongs to the Gram-negative porin family. As to quaternary structure, homotrimer.

Its subcellular location is the cell outer membrane. Its function is as follows. Forms pores that allow passive diffusion of small molecules across the outer membrane. In R.aquatilis OmpC is involved in the adhesion to wheat roots. This is Outer membrane porin C (ompC) from Rahnella aquatilis.